We begin with the raw amino-acid sequence, 417 residues long: MLKKDMNIADYDPELFNAIQNETLRQEEHIELIASENYTSPRVMEAQGSQLTNKYAEGYPGKRYYGGCEYVDVVETLAIERAKQLFGATYANVQPHSGSQANSAVYMALLKPGDTVLGMNLAHGGHLTHGSPVNFSGKLYNIIPYGIDESGKIDYEEMERIAIEHKPKMMIGGFSAYSGIVDWAKMREIADKIGAYLFVDMAHVAGLIAAGVYPNPVPHAHVVTSTTHKTLAGPRGGVILSAADDEDLYKKLNSAVFPGGQGGPLMHVIAGKAVAFKEALEPEFKVYQQQVVNNAKAMVEVFLERGYKIVSGGTSNHLMLVDLIGRDLTGKEADAALGSANITVNKNSVPNDPRSPFVTSGVRIGTPAITRRGFKEAESKELTGWICDILDDANNPAVIERVKGQVLALCARFPVYG.

(6S)-5,6,7,8-tetrahydrofolate-binding positions include Leu-121 and 125-127 (GHL). The residue at position 229 (Lys-229) is an N6-(pyridoxal phosphate)lysine. 355–357 (SPF) contacts (6S)-5,6,7,8-tetrahydrofolate.

It belongs to the SHMT family. In terms of assembly, homodimer. The cofactor is pyridoxal 5'-phosphate.

Its subcellular location is the cytoplasm. The enzyme catalyses (6R)-5,10-methylene-5,6,7,8-tetrahydrofolate + glycine + H2O = (6S)-5,6,7,8-tetrahydrofolate + L-serine. Its pathway is one-carbon metabolism; tetrahydrofolate interconversion. It functions in the pathway amino-acid biosynthesis; glycine biosynthesis; glycine from L-serine: step 1/1. Functionally, catalyzes the reversible interconversion of serine and glycine with tetrahydrofolate (THF) serving as the one-carbon carrier. This reaction serves as the major source of one-carbon groups required for the biosynthesis of purines, thymidylate, methionine, and other important biomolecules. Also exhibits THF-independent aldolase activity toward beta-hydroxyamino acids, producing glycine and aldehydes, via a retro-aldol mechanism. The protein is Serine hydroxymethyltransferase of Shewanella sp. (strain W3-18-1).